The sequence spans 1273 residues: Ribulose bisphosphate carboxylase small subunit, chloroplastic (1273 aa).

The transit peptide at 1 to 134 (MPFDRQPLLS…AVLPFTSEKD (134 aa)) directs the protein to the chloroplast. Propeptides lie at residues 269 to 278 (GMAAMTGEKD), 412 to 421 (GMAAMTGEKD), 556 to 565 (GMAAMTGEKD), 699 to 708 (GMAAMTGEKD), 844 to 853 (GMAAMTGEKE), 987 to 996 (GMAAMTGEKD), and 1131 to 1140 (GMAAMTGEKE).

The protein belongs to the RuBisCO small chain family. In terms of assembly, heterohexadecamer of 8 large and 8 small subunits. Eight small subunits are processed from a large polyprotein. All start with the same sequence but there is more heterogeneity at the C-terminus.

It is found in the plastid. Its subcellular location is the chloroplast. RuBisCO catalyzes two reactions: the carboxylation of D-ribulose 1,5-bisphosphate, the primary event in carbon dioxide fixation, as well as the oxidative fragmentation of the pentose substrate. Both reactions occur simultaneously and in competition at the same active site. Although the small subunit is not catalytic it is essential for maximal activity. This Euglena gracilis protein is Ribulose bisphosphate carboxylase small subunit, chloroplastic.